Reading from the N-terminus, the 101-residue chain is Phosphoprotein OPG062 (101 aa).

Positions 48-76 (VDKPSSPASERRPSSPSRCERMNNPGKQV) are disordered. A phosphoserine mark is found at serine 53 and serine 62. Basic and acidic residues predominate over residues 56–68 (SERRPSSPSRCER).

It belongs to the orthopoxvirus OPG062 family. Self-associates to form high molecular-weight forms. Interacts with protein OPG157. Interacts with host RICTOR and RPTOR; these interactions disrupt the mTORC1 and mTORC2 crosstalk. In terms of processing, phosphorylated on two serines. While these phosphorylations do not play a role in virion assembly; they are essential for the interaction with host RICTOR and RPTOR.

It localises to the virion. Plays an essential role in virion assembly and morphogenesis. Also plays a role in the inhibition of host immune response by dysregulating mTOR. Sequesters host RICTOR and RPTOR, thereby disrupting mTORC1 and mTORC2 crosstalk. In turn, blocks the host antiviral response in part through mTOR-dependent degradation of cGAS, the primary poxvirus sensor. In Variola virus (isolate Human/India/Ind3/1967) (VARV), this protein is Phosphoprotein OPG062 (OPG062).